We begin with the raw amino-acid sequence, 124 residues long: Fluoride-specific ion channel FluC (124 aa).

Helical transmembrane passes span 5–25, 32–52, 67–87, and 96–116; these read VYIA…SGLV, SFPY…GLVM, FAIT…SFET, and LLIA…CTWI. Na(+)-binding residues include glycine 75 and threonine 78.

Belongs to the fluoride channel Fluc/FEX (TC 1.A.43) family.

The protein resides in the cell inner membrane. It catalyses the reaction fluoride(in) = fluoride(out). With respect to regulation, na(+) is not transported, but it plays an essential structural role and its presence is essential for fluoride channel function. Fluoride-specific ion channel. Important for reducing fluoride concentration in the cell, thus reducing its toxicity. In Geobacter sp. (strain M21), this protein is Fluoride-specific ion channel FluC.